The sequence spans 281 residues: Orotidine 5'-phosphate decarboxylase (281 aa).

The Proton donor role is filled by Lys94.

The protein belongs to the OMP decarboxylase family. Type 2 subfamily.

It carries out the reaction orotidine 5'-phosphate + H(+) = UMP + CO2. Its pathway is pyrimidine metabolism; UMP biosynthesis via de novo pathway; UMP from orotate: step 2/2. This is Orotidine 5'-phosphate decarboxylase from Thermomicrobium roseum (strain ATCC 27502 / DSM 5159 / P-2).